A 332-amino-acid chain; its full sequence is Phosphate acyltransferase (332 aa).

Belongs to the PlsX family. Homodimer. Probably interacts with PlsY.

It is found in the cytoplasm. The enzyme catalyses a fatty acyl-[ACP] + phosphate = an acyl phosphate + holo-[ACP]. Its pathway is lipid metabolism; phospholipid metabolism. Its function is as follows. Catalyzes the reversible formation of acyl-phosphate (acyl-PO(4)) from acyl-[acyl-carrier-protein] (acyl-ACP). This enzyme utilizes acyl-ACP as fatty acyl donor, but not acyl-CoA. In Oceanobacillus iheyensis (strain DSM 14371 / CIP 107618 / JCM 11309 / KCTC 3954 / HTE831), this protein is Phosphate acyltransferase.